We begin with the raw amino-acid sequence, 341 residues long: Uroporphyrinogen decarboxylase (341 aa).

Substrate contacts are provided by residues 25–29 (RQAGR), F44, D74, Y151, S206, and H318.

The protein belongs to the uroporphyrinogen decarboxylase family. In terms of assembly, homodimer.

Its subcellular location is the cytoplasm. The catalysed reaction is uroporphyrinogen III + 4 H(+) = coproporphyrinogen III + 4 CO2. The protein operates within porphyrin-containing compound metabolism; protoporphyrin-IX biosynthesis; coproporphyrinogen-III from 5-aminolevulinate: step 4/4. Its function is as follows. Catalyzes the decarboxylation of four acetate groups of uroporphyrinogen-III to yield coproporphyrinogen-III. The sequence is that of Uroporphyrinogen decarboxylase from Flavobacterium johnsoniae (strain ATCC 17061 / DSM 2064 / JCM 8514 / BCRC 14874 / CCUG 350202 / NBRC 14942 / NCIMB 11054 / UW101) (Cytophaga johnsonae).